Here is a 104-residue protein sequence, read N- to C-terminus: uncharacterized protein (104 aa).

This is an uncharacterized protein from Mycobacterium tuberculosis (strain CDC 1551 / Oshkosh).